The primary structure comprises 679 residues: Stress-70 protein, mitochondrial (679 aa).

A mitochondrion-targeting transit peptide spans 1–46 (MISASRAAAARLVGTTASRSPAAARHQDGWNGLSHEAFRFVSRRDY). Positions 1–432 (MISASRAAAA…IQGGVLAGDV (432 aa)) are interaction with NFS1. The ADP site is built by Thr-63 and Asn-64. The tract at residues 63–431 (TNSCVAVMEG…AIQGGVLAGD (369 aa)) is nucleotide-binding domain (NBD). Residue Lys-76 is modified to N6-acetyllysine. The residue at position 87 (Thr-87) is a Phosphothreonine. N6-acetyllysine; alternate occurs at positions 135 and 138. N6-succinyllysine; alternate is present on residues Lys-135 and Lys-138. Position 143 is an N6-acetyllysine (Lys-143). N6-acetyllysine; alternate is present on Lys-206. The residue at position 206 (Lys-206) is an N6-succinyllysine; alternate. N6-malonyllysine; alternate is present on Lys-206. N6-acetyllysine occurs at positions 234 and 288. Lys-300 carries the post-translational modification N6-acetyllysine; alternate. Lys-300 is subject to N6-succinyllysine; alternate. The ADP site is built by Glu-313, Lys-316, and Ser-320. Lys-360 bears the N6-acetyllysine; alternate mark. Residue Lys-360 is modified to N6-succinyllysine; alternate. Lys-368 bears the N6-succinyllysine mark. Gly-388 and Arg-391 together coordinate ADP. Lys-394 is modified (N6-succinyllysine). Ser-408 carries the post-translational modification Phosphoserine. The tract at residues 432–441 (VTDVLLLDVT) is interdomain linker. Positions 432 to 679 (VTDVLLLDVT…QKEDQKEEKQ (248 aa)) are interaction with FXN and ISCU. The tract at residues 442 to 679 (PLSLGIETLG…QKEDQKEEKQ (238 aa)) is substrate-binding domain (SBD). At Arg-513 the chain carries Omega-N-methylarginine. Lys-567 and Lys-600 each carry N6-acetyllysine; alternate. Lys-567 and Lys-600 each carry N6-succinyllysine; alternate. Lys-610 carries the post-translational modification N6-succinyllysine. The residue at position 612 (Lys-612) is an N6-acetyllysine. An N6-acetyllysine; alternate modification is found at Lys-646. Position 646 is an N6-succinyllysine; alternate (Lys-646). Residues 655-679 (MASEREGSGSSSTGEQKEDQKEEKQ) form a disordered region. Over residues 669–679 (EQKEDQKEEKQ) the composition is skewed to basic and acidic residues.

Belongs to the heat shock protein 70 family. As to quaternary structure, interacts strongly with the intermediate form of FXN and weakly with its mature form. Interacts with HSCB. Associates with the mitochondrial contact site and cristae organizing system (MICOS) complex, composed of at least MICOS10/MIC10, CHCHD3/MIC19, CHCHD6/MIC25, APOOL/MIC27, IMMT/MIC60, APOO/MIC23/MIC26 and QIL1/MIC13. This complex was also known under the names MINOS or MitOS complex. The MICOS complex associates with mitochondrial outer membrane proteins SAMM50, MTX1, MTX2 and DNAJC11, mitochondrial inner membrane protein TMEM11 and with HSPA9. Interacts with DNLZ, the interaction is required to prevent self-aggregation. Interacts with TESPA1. Interacts with PDPN. Interacts with NFU1, NFS1 and ISCU. Interacts with TP53; the interaction promotes TP53 degradation. Interacts (via SBD domain) with UBXN2A; the interaction with UBXN2A inhibits HSPA9 interaction with and degradation of TP53, thereby promotes TP53 translocation to the nucleus. Interacts with ITPR1 AND VDAC1; this interaction couples ITPR1 to VDAC1. Component of the TIM23 mitochondrial inner membrane pre-sequence translocase complex.

It localises to the mitochondrion. It is found in the nucleus. The protein resides in the nucleolus. The protein localises to the cytoplasm. Its subcellular location is the mitochondrion matrix. The enzyme catalyses ATP + H2O = ADP + phosphate + H(+). Its activity is regulated as follows. The chaperone activity is regulated by ATP-induced allosteric coupling of the nucleotide-binding (NBD) and substrate-binding (SBD) domains. ATP binding in the nucleotide-binding pocket (NBP) leads to a conformational change in the NBD, which is transferred through the interdomain linker (IDL) to the substrate-binding domain (SBD). This elicits a reduced substrate affinity and a faster substrate exchange rate. Upon hydrolysis of ATP to ADP, the protein undergoes a conformational change that increases its affinity for substrate proteins. It cycles through repeated phases of ATP hydrolysis and nucleotide exchange, facilitating repeated cycles of substrate binding and release. Functions in collaboration with co-chaperones. Functions with the co-chaperone, DNLZ, to maintain solubility and regulate ATP hydrolysis. Nucleotide exchange factors, GRPEL1 and GRPEL2, accelerate nucleotide exchange. Functionally, mitochondrial chaperone that plays a key role in mitochondrial protein import, folding, and assembly. Plays an essential role in the protein quality control system, the correct folding of proteins, the re-folding of misfolded proteins, and the targeting of proteins for subsequent degradation. These processes are achieved through cycles of ATP binding, ATP hydrolysis, and ADP release, mediated by co-chaperones. In mitochondria, it associates with the TIM (translocase of the inner membrane) protein complex to assist in the import and folding of mitochondrial proteins. Plays an important role in mitochondrial iron-sulfur cluster (ISC) biogenesis, interacts with and stabilizes ISC cluster assembly proteins FXN, NFU1, NFS1 and ISCU. Regulates erythropoiesis via stabilization of ISC assembly. Regulates mitochondrial calcium-dependent apoptosis by coupling two calcium channels, ITPR1 and VDAC1, at the mitochondria-associated endoplasmic reticulum (ER) membrane to facilitate calcium transport from the ER lumen to the mitochondria intermembrane space, providing calcium for the downstream calcium channel MCU, which releases it into the mitochondrial matrix. Although primarily located in the mitochondria, it is also found in other cellular compartments. In the cytosol, it associates with proteins involved in signaling, apoptosis, or senescence. It may play a role in cell cycle regulation via its interaction with and promotion of degradation of TP53. May play a role in the control of cell proliferation and cellular aging. Protects against reactive oxygen species (ROS). Extracellular HSPA9 plays a cytoprotective role by preventing cell lysis following immune attack by the membrane attack complex by disrupting formation of the complex. The polypeptide is Stress-70 protein, mitochondrial (Rattus norvegicus (Rat)).